The chain runs to 92 residues: Conotoxin Mr15.2 (92 aa).

The signal sequence occupies residues 1–20 (MSTLKMMLLILLLLLPMATF). A propeptide spanning residues 21-53 (DSDGQAIPGGGIPSAVNSRVGGDEKSGRSLEKR) is cleaved from the precursor. The segment at 30–49 (GGIPSAVNSRVGGDEKSGRS) is disordered.

It belongs to the conotoxin N superfamily. Post-translationally, contains 4 disulfide bonds. As to expression, expressed by the venom duct.

The protein resides in the secreted. The sequence is that of Conotoxin Mr15.2 from Conus marmoreus (Marble cone).